Reading from the N-terminus, the 322-residue chain is Solute carrier family 35 member B1 (322 aa).

A run of 8 helical transmembrane segments spans residues 12–32 (LRLP…GILQ), 51–71 (FALT…KILI), 85–105 (WLYA…NSAL), 136–156 (YPLA…LFMY), 168–188 (TVGF…LTGV), 210–230 (LWST…WEFL), 243–263 (ILLF…TVVY), and 285–305 (VILF…LVFL). The Di-lysine motif motif lies at 318 to 322 (KKTSH).

This sequence belongs to the nucleotide-sugar transporter family. SLC35B subfamily.

It is found in the endoplasmic reticulum membrane. The enzyme catalyses ADP(in) + ATP(out) = ADP(out) + ATP(in). It carries out the reaction UDP(out) + ATP(in) = UDP(in) + ATP(out). It catalyses the reaction UTP(out) + ATP(in) = UTP(in) + ATP(out). The catalysed reaction is dATP(out) + ATP(in) = dATP(in) + ATP(out). Functionally, ATP:ADP antiporter that catalyzes the exchange of ATP and ADP across the endoplasmic reticulum (ER) membrane. Imports ATP from the cytosol to the ER lumen and exports ADP in the opposite direction. Regulates ER energy metabolism and protein biogenesis. Appears to be part of a calcium-dependent ER to cytosol low energy response axis, where calcium efflux from ER to the cytosol triggers ATP import into the ER lumen to maintain sufficient ATP supply. Provides ATP to ER chaperone HSPA5 that drives protein folding and trafficking in the ER. Can transport dATP, UTP or UDP in exchange for ATP, but the physiological relevance of this process remains to be established. In Rattus norvegicus (Rat), this protein is Solute carrier family 35 member B1 (Slc35b1).